Here is a 133-residue protein sequence, read N- to C-terminus: Large ribosomal subunit protein bL20 (133 aa).

It belongs to the bacterial ribosomal protein bL20 family.

Its function is as follows. Binds directly to 23S ribosomal RNA and is necessary for the in vitro assembly process of the 50S ribosomal subunit. It is not involved in the protein synthesizing functions of that subunit. The sequence is that of Large ribosomal subunit protein bL20 from Mesorhizobium japonicum (strain LMG 29417 / CECT 9101 / MAFF 303099) (Mesorhizobium loti (strain MAFF 303099)).